Consider the following 250-residue polypeptide: Tripartite motif-containing protein 74 (250 aa).

An RING-type zinc finger spans residues 16 to 57 (CPICLEVFKESLMLQCGHSYCKGCLVSLSYHLDTKVRCPMCW). The B box-type zinc-finger motif lies at 84–125 (PEPKVCVHHRNPLSLFCEKDQELICGLCGLLGSHQHHPVTPV). 4 residues coordinate Zn(2+): Cys89, His92, Cys111, and His117. Coiled coils occupy residues 125-169 (VSTV…NESD) and 204-235 (LVAS…FGNE).

It belongs to the TRIM/RBCC family.

The protein is Tripartite motif-containing protein 74 (TRIM74) of Homo sapiens (Human).